A 239-amino-acid polypeptide reads, in one-letter code: Ribosomal RNA small subunit methyltransferase G (239 aa).

S-adenosyl-L-methionine contacts are provided by residues Gly105, Leu110, Val156–Glu157, and Arg169.

This sequence belongs to the methyltransferase superfamily. RNA methyltransferase RsmG family.

It is found in the cytoplasm. It carries out the reaction guanosine(527) in 16S rRNA + S-adenosyl-L-methionine = N(7)-methylguanosine(527) in 16S rRNA + S-adenosyl-L-homocysteine. In terms of biological role, specifically methylates the N7 position of guanine in position 527 of 16S rRNA. In Verminephrobacter eiseniae (strain EF01-2), this protein is Ribosomal RNA small subunit methyltransferase G.